The primary structure comprises 783 residues: Mitochondrial intermediate peptidase (783 aa).

The N-terminal 33 residues, 1 to 33, are a transit peptide targeting the mitochondrion; it reads MKAGIPLSRCTQRIPLLVARQVSRNITTTTTKF. Histidine 565 contributes to the Zn(2+) binding site. Glutamate 566 is an active-site residue. Zn(2+) is bound by residues histidine 569 and histidine 572.

The protein belongs to the peptidase M3 family. Zn(2+) serves as cofactor.

The protein resides in the mitochondrion matrix. The catalysed reaction is Release of an N-terminal octapeptide as second stage of processing of some proteins imported into the mitochondrion.. In terms of biological role, cleaves proteins, imported into the mitochondrion, to their mature size. While most mitochondrial precursor proteins are processed to the mature form in one step by mitochondrial processing peptidase (MPP), the sequential cleavage by MIP of an octapeptide after initial processing by MPP is a required step for a subgroup of nuclear-encoded precursor proteins destined for the matrix or the inner membrane. The protein is Mitochondrial intermediate peptidase (OCT1) of Candida albicans (strain SC5314 / ATCC MYA-2876) (Yeast).